The primary structure comprises 339 residues: Glycerol-3-phosphate dehydrogenase [NAD(P)+] (339 aa).

Positions 13, 14, and 108 each coordinate NADPH. Positions 108, 139, and 141 each coordinate sn-glycerol 3-phosphate. A143 lines the NADPH pocket. 5 residues coordinate sn-glycerol 3-phosphate: K194, D247, S257, R258, and N259. Catalysis depends on K194, which acts as the Proton acceptor. Residue R258 participates in NADPH binding. Positions 282 and 284 each coordinate NADPH.

Belongs to the NAD-dependent glycerol-3-phosphate dehydrogenase family.

The protein localises to the cytoplasm. The enzyme catalyses sn-glycerol 3-phosphate + NAD(+) = dihydroxyacetone phosphate + NADH + H(+). It carries out the reaction sn-glycerol 3-phosphate + NADP(+) = dihydroxyacetone phosphate + NADPH + H(+). It functions in the pathway membrane lipid metabolism; glycerophospholipid metabolism. In terms of biological role, catalyzes the reduction of the glycolytic intermediate dihydroxyacetone phosphate (DHAP) to sn-glycerol 3-phosphate (G3P), the key precursor for phospholipid synthesis. This chain is Glycerol-3-phosphate dehydrogenase [NAD(P)+], found in Streptococcus equi subsp. equi (strain 4047).